We begin with the raw amino-acid sequence, 549 residues long: T-complex protein 1 subunit theta (549 aa).

It belongs to the TCP-1 chaperonin family. In terms of assembly, heterooligomeric complex of about 850 to 900 kDa that forms two stacked rings, 12 to 16 nm in diameter. Interacts with CCT3, KNAT1, STM and TTG1. Expressed in shoot meristems, root tip, vasculature and leaf epidermis.

It is found in the cytoplasm. In terms of biological role, molecular chaperone; assists the folding of proteins upon ATP hydrolysis. Known to play a role, in vitro, in the folding of actin and tubulin. Contributes to stem cell maintenance through its impact on transcription factors trafficking through plasmodesmata. Probably involved in refolding translocated, partially unfolded proteins, including viral movement proteins. The polypeptide is T-complex protein 1 subunit theta (Arabidopsis thaliana (Mouse-ear cress)).